The sequence spans 236 residues: Lectin (236 aa).

The N-linked (GlcNAc...) asparagine glycan is linked to N118.

It belongs to the leguminous lectin family. Homodimer of noncovalently associated chains.

D-mannose and D-glucose specific lectin. This is Lectin from Onobrychis viciifolia (Common sainfoin).